A 2178-amino-acid chain; its full sequence is Toxin A (2178 aa).

A four-helical bundle region spans residues 1 to 93 (MLITREQLMK…RELIKNSRTS (93 aa)). Positions 98–474 (KNLSFIWIGG…KPEVNSTVFF (377 aa)) constitute a GT44 domain. The tract at residues 98-474 (KNLSFIWIGG…KPEVNSTVFF (377 aa)) is glucosyltransferase region. Residues 98–474 (KNLSFIWIGG…KPEVNSTVFF (377 aa)) form an N-acetylglucosaminyltransferase region region. UDP-N-acetyl-alpha-D-glucosamine is bound by residues 103–105 (IWI), Asn141, 267–271 (SDILR), and 284–286 (DLD). Residues Asp284, Asp286, and Glu520 each coordinate Mg(2+). 523–525 (SSW) is a UDP-N-acetyl-alpha-D-glucosamine binding site. The interval 549 to 806 (NYEDGLNFNK…RVEQLNKVAE (258 aa)) is autoprocessing region. 1D-myo-inositol hexakisphosphate contacts are provided by Asn557, Lys607, and Lys651. Positions 574-787 (VNSTKIYENY…QISNKYVVYW (214 aa)) constitute a Peptidase C80 domain. The active-site For protease activity is His657. Cys707 serves as the catalytic Nucleophile; for protease activity. 1D-myo-inositol hexakisphosphate-binding positions include 758–759 (KR) and Lys782. The translocation region stretch occupies residues 807 to 1485 (FAKDINSIIQ…VYMEGKIFLN (679 aa)). Cell wall-binding repeat units lie at residues 1799-1818 (EYGW…INLI), 1820-1839 (KKGY…NTGV), 1870-1889 (YTGW…NSKA), 1890-1909 (VTGL…NGQM), 1910-1929 (QIKW…NTGE), 1931-1950 (IIGW…EGRL), 1951-1970 (LTGY…NING), 2004-2023 (YKGW…DSIA), 2024-2043 (VTGS…KTAV), 2045-2060 (TNGW…YVSN), 2064-2083 (VLGY…STGI), 2114-2133 (YTGW…YNSA), 2134-2153 (VTGW…KTGA), and 2155-2174 (TTGL…KGEQ).

It belongs to the clostridial glucosylating toxin (LCGT) family. Mn(2+) serves as cofactor. It depends on Mg(2+) as a cofactor. Post-translationally, undergoes autocatalytic cleavage to release the N-terminal part (N-acetylglucosaminyltransferase TcdA), which constitutes the active part of the toxin, in the host cytosol. 1D-myo-inositol hexakisphosphate-binding (InsP6) activates the peptidase C80 domain and promotes autoprocessing.

It is found in the secreted. The protein resides in the host endosome membrane. The protein localises to the host cytoplasm. Its subcellular location is the host cytosol. It localises to the host cell membrane. The enzyme catalyses L-threonyl-[protein] + UDP-N-acetyl-alpha-D-glucosamine = 3-O-(N-acetyl-alpha-D-glucosaminyl)-L-threonyl-[protein] + UDP + H(+). Its activity is regulated as follows. Protease activity is activated upon binding to 1D-myo-inositol hexakisphosphate (InsP6), which induces conformational reorganization. Its function is as follows. Precursor of a cytotoxin, which enters into host cells and mediates autoprocessing to release the active toxin (N-acetylglucosaminyltransferase TcdA) into the host cytosol. Once entered into host cells, acidification in the endosome promotes the membrane insertion of the translocation region and formation of a pore, leading to translocation of the GT44 and peptidase C80 domains across the endosomal membrane. This activates the peptidase C80 domain and autocatalytic processing, releasing the N-terminal part (N-acetylglucosaminyltransferase TcdA), which constitutes the active part of the toxin, in the cytosol. Functionally, active form of the toxin, which is released into the host cytosol following autoprocessing and inactivates small GTPases. Acts by mediating monoglycosylation of small GTPases of the Rho family (Rac1, RhoA, RhoG and Cdc42) in host cells at the conserved threonine residue located in the switch I region ('Thr-37/35'), using UDP-N-acetyl-alpha-D-glucosamine as the sugar donor. Monoglycosylation of host small GTPases completely prevents the recognition of the downstream effector, blocking the GTPases in their inactive form, leading to actin cytoskeleton disruption and cell death. The sequence is that of Toxin A (tcdA) from Clostridium novyi.